A 72-amino-acid polypeptide reads, in one-letter code: UPF0270 protein YheU (72 aa).

It belongs to the UPF0270 family.

In Salmonella dublin (strain CT_02021853), this protein is UPF0270 protein YheU.